The sequence spans 321 residues: Epoxyqueuosine reductase (321 aa).

Aspartate 137 serves as the catalytic Proton donor. A 4Fe-4S ferredoxin-type domain is found at 179-211; it reads EPLNADPPARSLCGRCSACIDACPTHAIREPFV. [4Fe-4S] cluster-binding residues include cysteine 191, cysteine 194, cysteine 197, cysteine 201, cysteine 217, cysteine 245, cysteine 248, and cysteine 252.

It belongs to the QueG family. As to quaternary structure, monomer. The cofactor is cob(II)alamin. [4Fe-4S] cluster is required as a cofactor.

It is found in the cytoplasm. The catalysed reaction is epoxyqueuosine(34) in tRNA + AH2 = queuosine(34) in tRNA + A + H2O. It functions in the pathway tRNA modification; tRNA-queuosine biosynthesis. Functionally, catalyzes the conversion of epoxyqueuosine (oQ) to queuosine (Q), which is a hypermodified base found in the wobble positions of tRNA(Asp), tRNA(Asn), tRNA(His) and tRNA(Tyr). The chain is Epoxyqueuosine reductase from Synechococcus sp. (strain CC9605).